We begin with the raw amino-acid sequence, 332 residues long: MATIYRDKDADLRVLKDKTIAIIGYGNQGHAQGANLKDSGLDVIAADLKDSPAWKRAEKDGLRVMTVPEASKEADFIQILLPDELQPRIYREQIAPYLEEGNILGFSHGFNIHFNQIIPPEYVDVVMVAPKGPGDLVRRQFLEGKGVPCLVAVKQDYSKSAKRIALAYAKGIGGTRAGVLETTFAEETETDLFGEQVDLCGGVTAMIKAAFETMVQAGYQPEIAYFEACHELKLITDLIHEGGLMKMWNSVSNTAEYGGLTRGDRIINEQSREAMWEILEEIQSGKFAREWILESQAGLPVKKALEQQESEHLIEKVGAELRAMMPWLGEKK.

In terms of domain architecture, KARI N-terminal Rossmann spans 1–182; that stretch reads MATIYRDKDA…GGTRAGVLET (182 aa). NADP(+) contacts are provided by residues 25–28, K49, S51, and 83–86; these read YGNQ and DELQ. The active site involves H108. G134 contacts NADP(+). Positions 183–328 constitute a KARI C-terminal knotted domain; that stretch reads TFAEETETDL…AELRAMMPWL (146 aa). 4 residues coordinate Mg(2+): D191, E195, E227, and E231. Residue S252 coordinates substrate.

The protein belongs to the ketol-acid reductoisomerase family. The cofactor is Mg(2+).

The enzyme catalyses (2R)-2,3-dihydroxy-3-methylbutanoate + NADP(+) = (2S)-2-acetolactate + NADPH + H(+). It carries out the reaction (2R,3R)-2,3-dihydroxy-3-methylpentanoate + NADP(+) = (S)-2-ethyl-2-hydroxy-3-oxobutanoate + NADPH + H(+). It functions in the pathway amino-acid biosynthesis; L-isoleucine biosynthesis; L-isoleucine from 2-oxobutanoate: step 2/4. Its pathway is amino-acid biosynthesis; L-valine biosynthesis; L-valine from pyruvate: step 2/4. In terms of biological role, involved in the biosynthesis of branched-chain amino acids (BCAA). Catalyzes an alkyl-migration followed by a ketol-acid reduction of (S)-2-acetolactate (S2AL) to yield (R)-2,3-dihydroxy-isovalerate. In the isomerase reaction, S2AL is rearranged via a Mg-dependent methyl migration to produce 3-hydroxy-3-methyl-2-ketobutyrate (HMKB). In the reductase reaction, this 2-ketoacid undergoes a metal-dependent reduction by NADPH to yield (R)-2,3-dihydroxy-isovalerate. The sequence is that of Ketol-acid reductoisomerase (NADP(+)) from Methanothrix thermoacetophila (strain DSM 6194 / JCM 14653 / NBRC 101360 / PT) (Methanosaeta thermophila).